Reading from the N-terminus, the 267-residue chain is Hydroxyethylthiazole kinase (267 aa).

M49 is a binding site for substrate. Residues R124 and T170 each contribute to the ATP site. Position 197 (G197) interacts with substrate.

It belongs to the Thz kinase family. Requires Mg(2+) as cofactor.

The enzyme catalyses 5-(2-hydroxyethyl)-4-methylthiazole + ATP = 4-methyl-5-(2-phosphooxyethyl)-thiazole + ADP + H(+). It functions in the pathway cofactor biosynthesis; thiamine diphosphate biosynthesis; 4-methyl-5-(2-phosphoethyl)-thiazole from 5-(2-hydroxyethyl)-4-methylthiazole: step 1/1. Its function is as follows. Catalyzes the phosphorylation of the hydroxyl group of 4-methyl-5-beta-hydroxyethylthiazole (THZ). In Tolumonas auensis (strain DSM 9187 / NBRC 110442 / TA 4), this protein is Hydroxyethylthiazole kinase.